Consider the following 169-residue polypeptide: MQSLISFAHSRLSWGILALSALALESAALYFQHIMKLDPCVMCIYQRVAVFGLLGAGLFGFMAPANRVIRALGALLWGISAAWGLKLALELVDMQNNPNPFSTCSFLPEFPSWLQLHEWLPSVFMPTGMCTDIPWEFAGVTMGEWMIVAFSVYLLAWLAFIVPMLKKSA.

The Cytoplasmic portion of the chain corresponds to 1–13 (MQSLISFAHSRLS). A helical transmembrane segment spans residues 14–30 (WGILALSALALESAALY). At 31–48 (FQHIMKLDPCVMCIYQRV) the chain is on the periplasmic side. The cysteines at positions 40 and 43 are disulfide-linked. A helical membrane pass occupies residues 49 to 64 (AVFGLLGAGLFGFMAP). The Cytoplasmic segment spans residues 65–71 (ANRVIRA). Residues 72–89 (LGALLWGISAAWGLKLAL) traverse the membrane as a helical segment. Over 90-144 (ELVDMQNNPNPFSTCSFLPEFPSWLQLHEWLPSVFMPTGMCTDIPWEFAGVTMGE) the chain is Periplasmic. Cysteines 104 and 130 form a disulfide. Residues 145–163 (WMIVAFSVYLLAWLAFIVP) form a helical membrane-spanning segment. Residues 164–169 (MLKKSA) are Cytoplasmic-facing.

Belongs to the DsbB family.

It is found in the cell inner membrane. Required for disulfide bond formation in some periplasmic proteins. Acts by oxidizing the DsbA protein. This Shewanella amazonensis (strain ATCC BAA-1098 / SB2B) protein is Disulfide bond formation protein B.